The chain runs to 258 residues: Type III pantothenate kinase (258 aa).

ATP is bound at residue 6 to 13 (DAGNTRIK). Substrate contacts are provided by residues Tyr-98 and 105 to 108 (GSDR). Asp-107 acts as the Proton acceptor in catalysis. ATP is bound at residue Thr-131. Thr-184 provides a ligand contact to substrate.

Belongs to the type III pantothenate kinase family. Homodimer. It depends on NH4(+) as a cofactor. K(+) is required as a cofactor.

Its subcellular location is the cytoplasm. It carries out the reaction (R)-pantothenate + ATP = (R)-4'-phosphopantothenate + ADP + H(+). It functions in the pathway cofactor biosynthesis; coenzyme A biosynthesis; CoA from (R)-pantothenate: step 1/5. Catalyzes the phosphorylation of pantothenate (Pan), the first step in CoA biosynthesis. The protein is Type III pantothenate kinase of Herminiimonas arsenicoxydans.